Here is a 294-residue protein sequence, read N- to C-terminus: MMRIALFLLTNLAVMVVFGLVLSLTGIQSSSMTGLLIMALLFGFGGSIVSLMMSKWMALKSVGGEVIEQPRNETERWLMNTVAQQAQQVGIAMPQVAIYHAPDINAFATGARRDASLVAVSTGLLQNMSRDEAEAVIAHEISHIANGDMVTMTLIQGVVNTFVIFISRVIAQIAAGFLGGNREDEGESSNGNPLIYFAVATVLELVFGILASIITMWFSRYREFHADAGSARLVGREKMIAALQRLKTSYEPQEASSMMAFCINGKAKSMSELFMTHPPLDKRIEALRSGEYLK.

The next 2 helical transmembrane spans lie at I4–L24 and G34–M52. Zn(2+) is bound at residue H139. The active site involves E140. H143 provides a ligand contact to Zn(2+). 2 helical membrane passes run V158–L178 and L194–I214. E223 contributes to the Zn(2+) binding site.

Belongs to the peptidase M48B family. Zn(2+) serves as cofactor.

It is found in the cell inner membrane. The sequence is that of Protease HtpX from Klebsiella pneumoniae subsp. pneumoniae (strain ATCC 700721 / MGH 78578).